Consider the following 306-residue polypeptide: Stimulator of interferon genes protein 5 (306 aa).

A disordered region spans residues 1–50 (MMSNDSQSEKRTAKWTGSGTPIAEGEESSSPSAHQTRQKATAADDDDDQQ). Tyr119, Arg180, and Arg186 together coordinate 2',3'-cGAMP.

It belongs to the STING family.

Facilitator of innate immune signaling that acts as a sensor of second messenger signals produced by cyclic GMP-AMP synthase-like receptors (cGLRs) and promotes the production of type I interferon. Innate immune response is triggered in response to nucleotides from viruses and bacteria delivered to the cytoplasm. Acts by binding cyclic dinucleotides: recognizes and binds 2'-3' linked cGAMP (2'-3'-cGAMP), a second messengers produced by cGLRs in response to nucleotides in the cytosol, such as double-stranded RNA (dsRNA). Upon binding to 2'-3'-cGAMP, oligomerizes and promotes the recruitment and subsequent activation of the transcription factor IRF3 to induce expression of type I interferon. The sequence is that of Stimulator of interferon genes protein 5 from Stylophora pistillata (Smooth cauliflower coral).